The primary structure comprises 209 residues: Ribosomal RNA small subunit methyltransferase G (209 aa).

Residues Gly71, Phe76, 122–123 (AE), and Arg135 each bind S-adenosyl-L-methionine.

This sequence belongs to the methyltransferase superfamily. RNA methyltransferase RsmG family.

Its subcellular location is the cytoplasm. Specifically methylates the N7 position of a guanine in 16S rRNA. This chain is Ribosomal RNA small subunit methyltransferase G, found in Flavobacterium johnsoniae (strain ATCC 17061 / DSM 2064 / JCM 8514 / BCRC 14874 / CCUG 350202 / NBRC 14942 / NCIMB 11054 / UW101) (Cytophaga johnsonae).